Here is a 309-residue protein sequence, read N- to C-terminus: Glutaminase (309 aa).

Positions 64, 114, 160, 167, 191, 243, and 261 each coordinate substrate.

It belongs to the glutaminase family. In terms of assembly, homotetramer.

The enzyme catalyses L-glutamine + H2O = L-glutamate + NH4(+). This chain is Glutaminase, found in Azorhizobium caulinodans (strain ATCC 43989 / DSM 5975 / JCM 20966 / LMG 6465 / NBRC 14845 / NCIMB 13405 / ORS 571).